The chain runs to 635 residues: Threonine--tRNA ligase (635 aa).

The TGS domain maps to Met1–Thr61. The segment at Asp242–Pro532 is catalytic. Zn(2+) is bound by residues Cys333, His384, and His509.

The protein belongs to the class-II aminoacyl-tRNA synthetase family. Homodimer. It depends on Zn(2+) as a cofactor.

The protein localises to the cytoplasm. It catalyses the reaction tRNA(Thr) + L-threonine + ATP = L-threonyl-tRNA(Thr) + AMP + diphosphate + H(+). In terms of biological role, catalyzes the attachment of threonine to tRNA(Thr) in a two-step reaction: L-threonine is first activated by ATP to form Thr-AMP and then transferred to the acceptor end of tRNA(Thr). Also edits incorrectly charged L-seryl-tRNA(Thr). This is Threonine--tRNA ligase from Clostridium botulinum (strain Okra / Type B1).